Here is a 210-residue protein sequence, read N- to C-terminus: Thymidylate kinase (210 aa).

Position 9 to 16 (9 to 16) interacts with ATP; that stretch reads GLEGAGKS.

Belongs to the thymidylate kinase family.

The catalysed reaction is dTMP + ATP = dTDP + ADP. Phosphorylation of dTMP to form dTDP in both de novo and salvage pathways of dTTP synthesis. The polypeptide is Thymidylate kinase (Aliivibrio salmonicida (strain LFI1238) (Vibrio salmonicida (strain LFI1238))).